A 2703-amino-acid chain; its full sequence is MYNGIGLPTPRGSGTNGYVQRNLSLVRGRRGERPDYKGEEELRHLEAALVKRPNPDILDHERKRRVELRCLELEEMMEEQGYEEQQIQEKVATFRLMLLEKDVNPGAKEETPGQRPVVTETHQLAELNEKKNERLRAAFGISDSYVDGSSFDPQRRAREAKQIAPEPPKPYSLVRETSSSRSPTPKQKKKKKKKDRGRRSESSSPRRERKKSSKKKKHRSESESKKRKHRSPTPKSKRKSKDKKRKRSRSTTPAPKSRRAHRSTSADSASSSDTSRSRSRSAAAKIHTTALTGQSPPLASGHQGEGDAPSVEPGATNIQQPSSPAPSTKQSSSPYEDKDKKEKSAVRPSPSPERSSTGPELPAPTPLLVEQHVDSPRPLAAIPSSQEPVNPSSEASPTRGCSPPKSPEKPPQSTSSESCPPSPQPTKGSRHASSSPESLKPTPAPGSRREISSSPTSKNRSHGRAKRDKSHSHTPSHRAGRSRSPATKRGRSRSRTPTKRGHSRSRSPQWRRSRSAQRWGKSRSPQRRGRSRSPQRPGWSRSRNTQRRGRSRSARRGRSHSRSPATRGRSRSRTPARRGRSRSRTPARRRSRSRTPARRRSRSRTPARRGRSRSRTPARRRSRTRSPVRRRSRSRSQARRSGRSRSRTPARRSGRSRSRTPARRGRSRSRTPARRSARSRSRTPARRGRSRSRTPARRRSRSRSLVRRGRSHSRTPQRRGRSGSSSERKNKSRTSQRRSRSNSSPEMKKSHVSSRRSRSLSSPRSKAKSLRRSLSGSSPCPKQKSQTPTRRSRSGSSPPKQKSKTPPRQSRSNSPQPKVKSGTPPRPGSVTNMQADECTATPQRQSHSESSPDGEVKSRTPSRQSCSGSSPRVKSSTPPRQSPSRSSSPQPKVKTVISPRGRSHSSSSSPSPSRVTSRTPQRKSRSISPCPKVDSRLRHSRSRSSSPDSKMELGTPLRHSGSTSPYLKSMLQTPPDQNLSGSKSPCPQKSRDSPTGSSGSFHLCPGVTPSSIVPGESCFSASFVQQKGHTQTWPDTSSPEVMQTQVESPLLQSKSQTSPKGSLSRSSSPVTELTARSPVKQDKSEISTDPKLKSGMSPEQSKTKPDSSIYPLVDSKSFLVQSRLEPSELKERLGLIQEDVASSCIPRDKFSPTQDRPESSTVLKVTPRVLLKERSGAGSPPGKRDQKSLLPNSSQDELMEVEKSEQPLSQVLPSLSPEHKEMPGSNIESSPEVEERPAVLSALDQSQSQPSKAAETPAVASCWSGPQVSPEHKELSHSPPRENSFESSLEFKNSGPVSEVNTGFSPEVKEELNGSFLNQTEADPSVDMKEQSRSSRRSSSELSPEVVEKVGLFSSQKVSSPVLETVQQRTPSRERSSSASPELKDGLPRTPSRRSRSGSSPGLRDGSGTPSRHSLSGSSPGMKDTPQTPSRGRSECDSSPEPKALPQTPRARSHSPSSPERNNKSVTPQRERSGSESSVEQKNLARTSPGQRSRSGSSQELDGKPSASPQERSESDSSPDSKPKTRTPLRQRSHSGSSPEVDSKSRHSPRLSRSGSSPEMKDKPRVLQRAQSGTDSSPEHKIPAPRALPRHSRSGSSSKERGPSPEGSSSSESSPEHAPKSRTARRGSRSSIEPKTKSHTPPRRRSSRSSPELTRKARVSRRSRSASSSPEIRSRTPPRRRRSPSVSSPEPTEKSRSSRRRRSVSSPRTKTTSRRGRSPSPKPRGLQRSRSRSRREKTRTTRRRDRSGSSQSTSRRRQRSRSRSRVTRRRRGGSGYHSRSPTRQESSRTSSRRRRGRSRTPLTSRKRSRSRTSPAPWKRSRSRASPATHRRSRSRTPLISRRRSRSRTSPVSRRRSRSVNRRRSRSRASPVSRRRSRSRTPPVTRRRSRSRTPTRRRSRSRTPPVTRRRSRSRTPPVTRRRSRSRTSPVTRRRSRSRTSPVTRRRSRSRTSPVTRRRSRSRTSPVTRRRSRSRTPPAIRRRSRSRTPLLPRKRSRSRSPLAIRRRSRSRTPRAARGKRSLTRSPPAIRRRSASGSSSDRSRSATPPATRNHSGSRTPPVALSSSRMSCFSRPSMSPTPLDRCRSPGMLEPLGSARTPMSVLQQTGGSMMDGPGPRIPDHPRSSVPENHAQSRIALALTAISLGTARPPPSMSAAGLAARMSQVPAPVPLMSLRTAPAANLASRIPAASAAAMNLASARTSAIPASVNLADSRTPAAAAAMNLASPRTAVAPSAVNLADPRTPAASAVNLAGARTPAALAALSLTGSGTPPTAANYPSSSRTPQAPTPANLVVGPRSAHGTAPVNIAGSRTPAGLAPTNLSSSRMAPALSGANLTSPRVPLSAYDRVSGRTSPLMLDRARSRTPPSAPSQSRMTSERERAPSPASRMVQASSQSLLPPAQDRPRSPVPSAFSDQSRSVVQTTPVAGSQSLSSGTVAKSTSSASDHNGMLSGPAPGISHAEGGEPPASTGAQQPSTLAALQPAKERRSSSSSSSSSSSSSSSSSSSSSSSSSGSSSSDSEGSSLPAQPEVALKRVPSPTPVPKEAIREGRPQEPTPAKRKRRSSSSSSSSSSSSSSSSSSSSSSSSSSSSSSSSSSSSSSSSSSPSPAKPGPQALPKPASPKKPPPGERRSRSPRKPIDSLRDSRSLSYSPVERRQPSPQPSPRDLQSSERVSWRGQRGDSHSPGHKRKETPSPRSNRHRSSRSP.

At M1 the chain carries N-acetylmethionine. Residues 60-92 (HERKRRVELRCLELEEMMEEQGYEEQQIQEKVA) are a coiled coil. An N6-acetyllysine modification is found at K101. Glycyl lysine isopeptide (Lys-Gly) (interchain with G-Cter in SUMO2) cross-links involve residues K108 and K130. A disordered region spans residues 141-1007 (ISDSYVDGSS…SGSFHLCPGV (867 aa)). Y145 carries the post-translational modification Phosphotyrosine. K169 carries the N6-acetyllysine modification. 2 stretches are compositionally biased toward basic residues: residues 186–197 (KQKKKKKKKDRG) and 207–249 (RERK…KRSR). The interval 197–259 (GRRSESSSPR…STTPAPKSRR (63 aa)) is sufficient for RNA-binding. Residues S220 and S222 each carry the phosphoserine modification. Residues 263–284 (STSADSASSSDTSRSRSRSAAA) are compositionally biased toward low complexity. 5 positions are modified to phosphoserine: S295, S300, S310, S322, and S323. The span at 319–334 (QQPSSPAPSTKQSSSP) shows a compositional bias: low complexity. Residues 335 to 345 (YEDKDKKEKSA) are compositionally biased toward basic and acidic residues. Phosphoserine occurs at positions 349, 351, 355, and 356. Phosphothreonine occurs at positions 357 and 365. Residues S375, S385, S393, S396, S402, S406, S422, S433, S434, S435, S438, S452, S482, S484, S503, S505, S507, S531, S533, and S540 each carry the phosphoserine modification. The segment covering 383-396 (PSSQEPVNPSSEAS) has biased composition (polar residues). Positions 425 to 437 (PTKGSRHASSSPE) are enriched in polar residues. Residues 459–533 (NRSHGRAKRD…SPQRRGRSRS (75 aa)) are compositionally biased toward basic residues. Low complexity predominate over residues 534-543 (PQRPGWSRSR). 3 stretches are compositionally biased toward basic residues: residues 544–561 (NTQR…RSHS), 568–721 (GRSR…RRGR), and 730–740 (NKSRTSQRRSR). Phosphoserine occurs at positions 700, 702, and 704. 3 positions are modified to phosphoserine: S773, S775, and S778. A compositionally biased stretch (low complexity) spans 785 to 817 (SQTPTRRSRSGSSPPKQKSKTPPRQSRSNSPQP). Residues S821 and S829 each carry the phosphoserine modification. Polar residues-rich tracts occupy residues 829 to 851 (SVTN…SESS) and 859 to 874 (RTPS…PRVK). Residues T831 and T841 each carry the phosphothreonine modification. 3 positions are modified to phosphoserine: S846, S850, and S851. Composition is skewed to low complexity over residues 875 to 891 (SSTP…SPQP) and 898 to 919 (SPRG…TSRT). 11 positions are modified to phosphoserine: S882, S909, S924, S926, S928, S940, S942, S944, S945, S946, and S949. T955 carries the post-translational modification Phosphothreonine. The segment covering 960-1000 (SGSTSPYLKSMLQTPPDQNLSGSKSPCPQKSRDSPTGSSGS) has biased composition (polar residues). Phosphoserine is present on residues S962 and S964. Phosphotyrosine is present on Y966. A Phosphothreonine modification is found at T973. A phosphoserine mark is found at S980, S984, and S993. T995 is subject to Phosphothreonine. S997, S1000, S1011, S1037, and S1038 each carry phosphoserine. Residues 1024–1057 (VQQKGHTQTWPDTSSPEVMQTQVESPLLQSKSQT) show a composition bias toward polar residues. Residues 1024-1112 (VQQKGHTQTW…TKPDSSIYPL (89 aa)) are disordered. Position 1044 is a phosphothreonine (T1044). Phosphoserine occurs at positions 1048, 1064, 1066, 1067, and 1068. Residues 1058–1068 (SPKGSLSRSSS) show a composition bias toward low complexity. At T1071 the chain carries Phosphothreonine. 27 positions are modified to phosphoserine: S1077, S1087, S1094, S1097, S1117, S1151, S1159, S1175, S1188, S1216, S1225, S1229, S1230, S1269, S1276, S1278, S1284, S1287, S1294, S1305, S1325, S1338, S1339, S1340, S1343, S1359, and S1360. The segment covering 1079-1092 (VKQDKSEISTDPKL) has biased composition (basic and acidic residues). Residues 1136–2092 (IQEDVASSCI…RSPGMLEPLG (957 aa)) are disordered. Over residues 1146–1158 (PRDKFSPTQDRPE) the composition is skewed to basic and acidic residues. Residues 1270–1284 (PEHKELSHSPPRENS) show a composition bias toward basic and acidic residues. Positions 1285 to 1304 (FESSLEFKNSGPVSEVNTGF) are enriched in polar residues. T1370 bears the Phosphothreonine mark. Positions 1371-1387 (PSRERSSSASPELKDGL) are enriched in basic and acidic residues. Phosphoserine occurs at positions 1372, 1378, and 1380. The residue at position 1390 (T1390) is a Phosphothreonine. The span at 1397 to 1408 (SGSSPGLRDGSG) shows a compositional bias: low complexity. Residues S1400 and S1407 each carry the phosphoserine modification. Residue T1409 is modified to Phosphothreonine. Over residues 1409–1431 (TPSRHSLSGSSPGMKDTPQTPSR) the composition is skewed to polar residues. Residues S1414, S1416, S1418, and S1419 each carry the phosphoserine modification. The residue at position 1428 (T1428) is a Phosphothreonine. Phosphoserine occurs at positions 1438 and 1439. T1448 is modified (phosphothreonine). S1453, S1455, S1457, S1458, and S1465 each carry phosphoserine. Positions 1454–1468 (HSPSSPERNNKSVTP) are enriched in polar residues. At T1467 the chain carries Phosphothreonine. Residues S1473, S1475, S1477, and S1478 each carry the phosphoserine modification. The span at 1475 to 1489 (SESSVEQKNLARTSP) shows a compositional bias: polar residues. T1487 is subject to Phosphothreonine. Low complexity predominate over residues 1490–1499 (GQRSRSGSSQ). S1493, S1495, S1497, S1498, and S1508 each carry phosphoserine. Basic and acidic residues predominate over residues 1511–1523 (ERSESDSSPDSKP). The span at 1524-1533 (KTRTPLRQRS) shows a compositional bias: basic residues. 15 positions are modified to phosphoserine: S1533, S1535, S1537, S1538, S1554, S1556, S1557, S1572, S1576, S1577, S1604, S1614, S1647, S1649, and S1650. Positions 1604 to 1613 (SPEGSSSSES) are enriched in low complexity. Positions 1637–1647 (KSHTPPRRRSS) are enriched in basic residues. Residue T1654 is modified to Phosphothreonine. Phosphoserine occurs at positions 1683, 1685, 1687, 1688, 1718, and 1720. Composition is skewed to basic residues over residues 1725–1745 (GLQR…RRRD) and 1754–1772 (SRRR…RRRG). S1774, S1778, S1810, S1813, S1832, and S1834 each carry phosphoserine. Residues 1776-1789 (YHSRSPTRQESSRT) are compositionally biased toward low complexity. The span at 1790–1810 (SSRRRRGRSRTPLTSRKRSRS) shows a compositional bias: basic residues. Residues 1818-2020 (KRSRSRASPA…PRAARGKRSL (203 aa)) are compositionally biased toward basic residues. Position 1836 is a phosphothreonine (T1836). 2 positions are modified to phosphoserine: S1840 and S1846. Residue T1848 is modified to Phosphothreonine. A phosphoserine mark is found at S1849, S1869, S1872, S1876, and S1878. 2 positions are modified to phosphothreonine: T1880 and T1884. Residues S1898 and S1900 each carry the phosphoserine modification. Phosphothreonine occurs at positions 1902 and 1906. A phosphoserine mark is found at S1910 and S1912. Phosphothreonine occurs at positions 1914 and 1918. Residues S1922, S1924, and S1927 each carry the phosphoserine modification. T1930 carries the phosphothreonine modification. Phosphoserine is present on residues S1936, S1939, S1948, S1951, S1960, S1963, S1970, and S1972. T1974 bears the Phosphothreonine mark. Residues S1982 and S1984 each carry the phosphoserine modification. Position 1986 is a phosphothreonine (T1986). Phosphoserine occurs at positions 1994, 1996, 1998, and 2019. The residue at position 2021 (T2021) is a Phosphothreonine. Residues 2022-2047 (RSPPAIRRRSASGSSSDRSRSATPPA) show a composition bias toward low complexity. S2023 and S2042 each carry phosphoserine. T2044 carries the phosphothreonine modification. Residues S2052 and S2054 each carry the phosphoserine modification. The residue at position 2056 (T2056) is a Phosphothreonine. Positions 2062–2076 (SSSRMSCFSRPSMSP) are enriched in low complexity. S2070, S2073, S2075, and S2084 each carry phosphoserine. Position 2096 is a phosphothreonine (T2096). R2146, R2159, R2183, and R2198 each carry omega-N-methylarginine. Residue S2224 is modified to Phosphoserine. R2226 and R2240 each carry omega-N-methylarginine. T2241 and T2254 each carry phosphothreonine. The residue at position 2262 (S2262) is a Phosphoserine. The tract at residues 2263 to 2703 (LTGSGTPPTA…SNRHRSSRSP (441 aa)) is disordered. Residues T2268 and T2281 each carry the phosphothreonine modification. A compositionally biased stretch (polar residues) spans 2269–2283 (PPTAANYPSSSRTPQ). R2295 carries the omega-N-methylarginine modification. Phosphoserine occurs at positions 2296, 2321, and 2329. T2334 carries the post-translational modification Phosphothreonine. The residue at position 2335 (S2335) is a Phosphoserine. R2337 is modified (asymmetric dimethylarginine; alternate). R2337 is modified (omega-N-methylarginine; alternate). Phosphoserine occurs at positions 2347, 2351, and 2360. T2362 is subject to Phosphothreonine. Phosphoserine occurs at positions 2365, 2368, 2381, 2384, 2404, and 2408. Composition is skewed to polar residues over residues 2410–2443 (FSDQ…SASD) and 2467–2476 (TGAQQPSTLA). The segment covering 2487–2521 (SSSSSSSSSSSSSSSSSSSSSSSSGSSSSDSEGSS) has biased composition (low complexity). S2535 carries the phosphoserine modification. Position 2537 is a phosphothreonine (T2537). Residue K2541 forms a Glycyl lysine isopeptide (Lys-Gly) (interchain with G-Cter in SUMO2) linkage. T2553 is modified (phosphothreonine). A compositionally biased stretch (low complexity) spans 2562 to 2602 (SSSSSSSSSSSSSSSSSSSSSSSSSSSSSSSSSSSSSSSSS). Residues 2605-2622 (PAKPGPQALPKPASPKKP) are compositionally biased toward pro residues. A phosphoserine mark is found at S2618, S2629, S2631, S2638, S2642, S2644, S2646, S2648, S2656, and S2660. Residues 2623–2643 (PPGERRSRSPRKPIDSLRDSR) show a composition bias toward basic and acidic residues. T2689 is modified (phosphothreonine). The residue at position 2691 (S2691) is a Phosphoserine. Residues 2694-2703 (SNRHRSSRSP) are compositionally biased toward basic residues.

The protein belongs to the CWC21 family. In terms of assembly, component of pre-catalytic, catalytic and post-catalytic spliceosome complexes. Found in a pre-mRNA splicing complex with SFRS4, SFRS5, SNRP70, SNRPA1, SRRM1 and SRRM2. Component of the minor spliceosome, which splices U12-type introns. Interacts with DHX8. Interacts with CACTIN.

It is found in the nucleus. The protein localises to the nucleus speckle. Required for pre-mRNA splicing as component of the spliceosome. As a component of the minor spliceosome, involved in the splicing of U12-type introns in pre-mRNAs. The sequence is that of Serine/arginine repetitive matrix protein 2 (Srrm2) from Mus musculus (Mouse).